A 96-amino-acid polypeptide reads, in one-letter code: Co-chaperonin GroES (96 aa).

This sequence belongs to the GroES chaperonin family. Heptamer of 7 subunits arranged in a ring. Interacts with the chaperonin GroEL.

The protein localises to the cytoplasm. Together with the chaperonin GroEL, plays an essential role in assisting protein folding. The GroEL-GroES system forms a nano-cage that allows encapsulation of the non-native substrate proteins and provides a physical environment optimized to promote and accelerate protein folding. GroES binds to the apical surface of the GroEL ring, thereby capping the opening of the GroEL channel. The sequence is that of Co-chaperonin GroES from Nitrosococcus oceani (strain ATCC 19707 / BCRC 17464 / JCM 30415 / NCIMB 11848 / C-107).